The chain runs to 283 residues: 5'-nucleotidase SurE 2 (283 aa).

Asp19, Asp20, Ser52, and Asn110 together coordinate a divalent metal cation.

It belongs to the SurE nucleotidase family. The cofactor is a divalent metal cation.

It localises to the cytoplasm. The catalysed reaction is a ribonucleoside 5'-phosphate + H2O = a ribonucleoside + phosphate. In terms of biological role, nucleotidase that shows phosphatase activity on nucleoside 5'-monophosphates. In Chlamydia caviae (strain ATCC VR-813 / DSM 19441 / 03DC25 / GPIC) (Chlamydophila caviae), this protein is 5'-nucleotidase SurE 2.